A 339-amino-acid chain; its full sequence is Ribosomal RNA small subunit methyltransferase C (339 aa).

This sequence belongs to the methyltransferase superfamily. RsmC family. Monomer.

It localises to the cytoplasm. It carries out the reaction guanosine(1207) in 16S rRNA + S-adenosyl-L-methionine = N(2)-methylguanosine(1207) in 16S rRNA + S-adenosyl-L-homocysteine + H(+). Functionally, specifically methylates the guanine in position 1207 of 16S rRNA in the 30S particle. The polypeptide is Ribosomal RNA small subunit methyltransferase C (Aliivibrio fischeri (strain ATCC 700601 / ES114) (Vibrio fischeri)).